Reading from the N-terminus, the 325-residue chain is uncharacterized protein (325 aa).

Tyr59 (proton donor) is an active-site residue. His117 is a substrate binding site.

The protein belongs to the aldo/keto reductase family.

It is found in the cytoplasm. The protein resides in the nucleus. This is an uncharacterized protein from Schizosaccharomyces pombe (strain 972 / ATCC 24843) (Fission yeast).